Here is a 125-residue protein sequence, read N- to C-terminus: Phosphoribosyl-AMP cyclohydrolase (125 aa).

Mg(2+) is bound at residue D74. Residue C75 coordinates Zn(2+). Mg(2+)-binding residues include D76 and D78. Residues C92 and C99 each coordinate Zn(2+).

It belongs to the PRA-CH family. Homodimer. It depends on Mg(2+) as a cofactor. The cofactor is Zn(2+).

The protein localises to the cytoplasm. The catalysed reaction is 1-(5-phospho-beta-D-ribosyl)-5'-AMP + H2O = 1-(5-phospho-beta-D-ribosyl)-5-[(5-phospho-beta-D-ribosylamino)methylideneamino]imidazole-4-carboxamide. The protein operates within amino-acid biosynthesis; L-histidine biosynthesis; L-histidine from 5-phospho-alpha-D-ribose 1-diphosphate: step 3/9. Its function is as follows. Catalyzes the hydrolysis of the adenine ring of phosphoribosyl-AMP. The polypeptide is Phosphoribosyl-AMP cyclohydrolase (Trichlorobacter lovleyi (strain ATCC BAA-1151 / DSM 17278 / SZ) (Geobacter lovleyi)).